The following is a 225-amino-acid chain: Guanylate kinase (225 aa).

Residues 20-198 (GNLFMVVAPS…ALSELQCLVA (179 aa)) form the Guanylate kinase-like domain. 27 to 34 (APSGAGKS) contributes to the ATP binding site.

It belongs to the guanylate kinase family.

It is found in the cytoplasm. It catalyses the reaction GMP + ATP = GDP + ADP. In terms of biological role, essential for recycling GMP and indirectly, cGMP. The chain is Guanylate kinase from Paraburkholderia xenovorans (strain LB400).